The following is a 131-amino-acid chain: Agouti-related protein (131 aa).

The first 20 residues, 1-20 (MLTAMLLSCVLLLALPPTLG), serve as a signal peptide directing secretion. Residues 21–81 (VQMGVAPLKG…VLDPQNRESR (61 aa)) constitute a propeptide that is removed on maturation. 5 disulfides stabilise this stretch: cysteine 86/cysteine 101, cysteine 93/cysteine 107, cysteine 100/cysteine 118, cysteine 104/cysteine 128, and cysteine 109/cysteine 116. In terms of domain architecture, Agouti spans 86 to 128 (CVRLHESCLGQQVPCCDPCATCYCRFFNAFCYCRKLGTATNLC). The tract at residues 110 to 112 (RFF) is interaction with melanocortin receptors.

In terms of assembly, interacts with melanocortin receptors MC3R, MC4R and MC5R. Expressed in arcuate nucleus and median eminence, adrenal gland (medulla), hypothalamus, testis, and lung.

It is found in the secreted. The protein resides in the golgi apparatus lumen. Plays a role in weight homeostasis. Involved in the control of feeding behavior through the central melanocortin system. Acts as alpha melanocyte-stimulating hormone antagonist by inhibiting cAMP production mediated by stimulation of melanocortin receptors within the hypothalamus and adrenal gland. Has very low activity with MC5R. Is an inverse agonist for MC3R and MC4R being able to suppress their constitutive activity. It promotes MC3R and MC4R endocytosis in an arrestin-dependent manner. This Mus musculus (Mouse) protein is Agouti-related protein (Agrp).